The primary structure comprises 296 residues: Prostate androgen-regulated mucin-like protein 1 homolog (296 aa).

An N-terminal signal peptide occupies residues 1–20; it reads MVCKALITLCIFAAGLRVQG. At 21-244 the chain is on the extracellular side; it reads SPTPTLLPVS…EVENALSSGS (224 aa). N-linked (GlcNAc...) asparagine glycans are attached at residues N62, N96, and N108. A disordered region spans residues 73–220; the sequence is LTSQLPTHPR…SPQDTEPGKV (148 aa). Residues 80–96 are compositionally biased toward basic and acidic residues; the sequence is HPREEAVTSPPLKREVN. Positions 97 to 111 are enriched in low complexity; the sequence is STDSSPTGFSSNSSG. Over residues 125–145 the composition is skewed to polar residues; it reads SPETSVPATGSQSPTLLFSQG. Low complexity-rich tracts occupy residues 146 to 175 and 195 to 205; these read PTSASTSPATSPSEPLSASVTSNHSSTVNN and SHTPTSHVTEP. Residue N168 is glycosylated (N-linked (GlcNAc...) asparagine). Residues 206-217 show a composition bias toward basic and acidic residues; the sequence is VPKEKSPQDTEP. A helical membrane pass occupies residues 245-265; that stretch reads IAAITVTVIAVVLLVFGAAAY. Topologically, residues 266-296 are cytoplasmic; that stretch reads LKIRHSSYGRLLDDHDYGSWGNYNNPLYDDS. Phosphoserine is present on S284.

The protein belongs to the PARM family. Post-translationally, highly N-glycosylated and O-glycosylated. Expressed in prostate. Detected in other organs at low levels, these include the heart and various tissues of the urogenital tract. Not detected in mammary gland.

The protein resides in the cell membrane. It is found in the golgi apparatus membrane. The protein localises to the endosome membrane. May regulate TLP1 expression and telomerase activity, thus enabling certain prostatic cells to resist apoptosis. This Rattus norvegicus (Rat) protein is Prostate androgen-regulated mucin-like protein 1 homolog (Parm1).